The sequence spans 315 residues: Methionyl-tRNA formyltransferase (315 aa).

Residue 113–116 coordinates (6S)-5,6,7,8-tetrahydrofolate; that stretch reads SLLP.

It belongs to the Fmt family.

The enzyme catalyses L-methionyl-tRNA(fMet) + (6R)-10-formyltetrahydrofolate = N-formyl-L-methionyl-tRNA(fMet) + (6S)-5,6,7,8-tetrahydrofolate + H(+). In terms of biological role, attaches a formyl group to the free amino group of methionyl-tRNA(fMet). The formyl group appears to play a dual role in the initiator identity of N-formylmethionyl-tRNA by promoting its recognition by IF2 and preventing the misappropriation of this tRNA by the elongation apparatus. In Shigella dysenteriae serotype 1 (strain Sd197), this protein is Methionyl-tRNA formyltransferase.